A 397-amino-acid chain; its full sequence is Argininosuccinate synthase (397 aa).

ATP contacts are provided by residues Ala-9–Ser-17 and Ala-35. Positions 88 and 93 each coordinate L-citrulline. An ATP-binding site is contributed by Gly-117. Residues Thr-119, Asn-123, and Asp-124 each coordinate L-aspartate. Asn-123 serves as a coordination point for L-citrulline. Residue Arg-127 coordinates L-citrulline.

This sequence belongs to the argininosuccinate synthase family. Type 1 subfamily. In terms of assembly, homotetramer.

Its subcellular location is the cytoplasm. It carries out the reaction L-citrulline + L-aspartate + ATP = 2-(N(omega)-L-arginino)succinate + AMP + diphosphate + H(+). Its pathway is amino-acid biosynthesis; L-arginine biosynthesis; L-arginine from L-ornithine and carbamoyl phosphate: step 2/3. In Xanthomonas campestris pv. campestris (strain ATCC 33913 / DSM 3586 / NCPPB 528 / LMG 568 / P 25), this protein is Argininosuccinate synthase.